The primary structure comprises 422 residues: Dihydroorotase (422 aa).

The Zn(2+) site is built by H59 and H61. Residues 61 to 63 and N93 contribute to the substrate site; that span reads HFR. D150, H177, and H230 together coordinate Zn(2+). N276 provides a ligand contact to substrate. D303 is a Zn(2+) binding site. D303 is an active-site residue. Residue H307 participates in substrate binding.

This sequence belongs to the metallo-dependent hydrolases superfamily. DHOase family. Class I DHOase subfamily. The cofactor is Zn(2+).

It carries out the reaction (S)-dihydroorotate + H2O = N-carbamoyl-L-aspartate + H(+). It functions in the pathway pyrimidine metabolism; UMP biosynthesis via de novo pathway; (S)-dihydroorotate from bicarbonate: step 3/3. In terms of biological role, catalyzes the reversible cyclization of carbamoyl aspartate to dihydroorotate. The polypeptide is Dihydroorotase (Streptococcus thermophilus (strain CNRZ 1066)).